Reading from the N-terminus, the 883-residue chain is NF-X1-type zinc finger protein NFXL2 (883 aa).

Positions methionine 1–threonine 10 are enriched in polar residues. Residues methionine 1–arginine 44 form a disordered region. The segment at cysteine 87–arginine 152 adopts an RING-type; degenerate zinc-finger fold. 11 consecutive NF-X1-type zinc fingers follow at residues cysteine 198–lysine 216, cysteine 250–glutamate 269, cysteine 303–tyrosine 322, cysteine 357–isoleucine 377, cysteine 410–glutamate 429, cysteine 437–isoleucine 456, cysteine 494–leucine 515, cysteine 523–glutamate 568, cysteine 605–leucine 636, cysteine 646–threonine 664, and cysteine 709–cysteine 738. Residues glutamate 798–glutamine 824 form a disordered region. A helical membrane pass occupies residues methionine 841–leucine 863.

Belongs to the NFX1 family. As to quaternary structure, interacts with ADO1/ZTL. In terms of tissue distribution, constitutively expressed in mesophyll and guard cells.

It is found in the nucleus. The protein localises to the membrane. It participates in protein modification; protein ubiquitination. Functionally, probable transcriptional regulator. May mediate E2- or E3-dependent ubiquitination. Required to gate light sensitivity during the night. Regulates the speed of the clock by acting in the feedback loop between CCA1, LHY and APRR1/TOC1. Promotes the expression of CCA1 at night but not by days. This activational effect is enhanced by interaction with ADO1/ZTL. Association with ADO1/ZTL is not leading to the degradation of NFXL2. Confers sensitivity to osmotic stress such as high salinity. Prevents H(2)O(2) production and abscisic acid accumulation. Part of a regulatory network that integrates the biosynthesis and action of abscisic acid, reactive oxygen species and cuticle components. This Arabidopsis thaliana (Mouse-ear cress) protein is NF-X1-type zinc finger protein NFXL2 (NFXL2).